The chain runs to 355 residues: Heterogeneous nuclear ribonucleoprotein D0 (355 aa).

Residues 1-92 (MSEEQFGGDG…SPRHSEAATA (92 aa)) are disordered. Serine 2 carries the N-acetylserine modification. 2 stretches are compositionally biased toward low complexity: residues 11-20 (AAAAATAAVG) and 27-42 (EGAM…AAAG). The segment covering 43–58 (SGAGTGGGTASGGTEG) has biased composition (gly residues). Residues 64 to 73 (EGAKIDASKN) are compositionally biased toward basic and acidic residues. Residue serine 71 is modified to Phosphoserine. Lysine 72 is covalently cross-linked (Glycyl lysine isopeptide (Lys-Gly) (interchain with G-Cter in SUMO2)). 3 positions are modified to phosphoserine: serine 80, serine 82, and serine 83. At threonine 91 the chain carries Phosphothreonine. RRM domains follow at residues 97-179 (WKMF…KTKE) and 182-261 (KKIF…MSKE). Lysine 119 is subject to N6-methyllysine. Phosphothreonine is present on threonine 127. Lysine 129 is covalently cross-linked (Glycyl lysine isopeptide (Lys-Gly) (interchain with G-Cter in SUMO2)). Residue lysine 165 is modified to N6-acetyllysine. Position 190 is a phosphoserine (serine 190). Threonine 193 is modified (phosphothreonine). A Glycyl lysine isopeptide (Lys-Gly) (interchain with G-Cter in SUMO2) cross-link involves residue lysine 197. Lysine 243 and lysine 251 each carry N6-acetyllysine. Omega-N-methylarginine is present on tyrosine 263. Serine 271 is subject to Phosphoserine. Arginine 272 carries the post-translational modification Omega-N-methylarginine. Glycine 273 is subject to N6-acetyllysine. Omega-N-methylarginine is present on residues arginine 278, arginine 280, and arginine 282. N6-acetyllysine is present on glutamine 292. Residue arginine 345 is modified to Asymmetric dimethylarginine; alternate. At arginine 345 the chain carries Dimethylated arginine; alternate. Arginine 345 carries the omega-N-methylarginine; alternate modification.

In terms of assembly, identified in a IGF2BP1-dependent mRNP granule complex containing untranslated mRNAs. Part of a complex associated with the FOS mCRD domain and consisting of PABPC1, PAIP1, CSDE1/UNR and SYNCRIP. Interacts with IGF2BP2. Interacts with GTPBP1. Interacts with EIF4G1; the interaction requires RNA. Interacts with EIF3B and RPS3. Arg-345 is dimethylated, probably to asymmetric dimethylarginine. Post-translationally, methylated by PRMT1, in an insulin-dependent manner. The PRMT1-mediated methylation regulates tyrosine phosphorylation.

It is found in the nucleus. The protein resides in the cytoplasm. Its function is as follows. Binds with high affinity to RNA molecules that contain AU-rich elements (AREs) found within the 3'-UTR of many proto-oncogenes and cytokine mRNAs. Also binds to double- and single-stranded DNA sequences in a specific manner and functions a transcription factor. Each of the RNA-binding domains specifically can bind solely to a single-stranded non-monotonous 5'-UUAG-3' sequence and also weaker to the single-stranded 5'-TTAGGG-3' telomeric DNA repeat. Binds RNA oligonucleotides with 5'-UUAGGG-3' repeats more tightly than the telomeric single-stranded DNA 5'-TTAGGG-3' repeats. Binding of RRM1 to DNA inhibits the formation of DNA quadruplex structure which may play a role in telomere elongation. May be involved in translationally coupled mRNA turnover. Implicated with other RNA-binding proteins in the cytoplasmic deadenylation/translational and decay interplay of the FOS mRNA mediated by the major coding-region determinant of instability (mCRD) domain. May play a role in the regulation of the rhythmic expression of circadian clock core genes. Directly binds to the 3'UTR of CRY1 mRNA and induces CRY1 rhythmic translation. May also be involved in the regulation of PER2 translation. This Homo sapiens (Human) protein is Heterogeneous nuclear ribonucleoprotein D0 (HNRNPD).